Reading from the N-terminus, the 313-residue chain is Ribosomal RNA small subunit methyltransferase H (313 aa).

S-adenosyl-L-methionine-binding positions include glycine 35–histidine 37, aspartate 55, phenylalanine 81, aspartate 103, and glutamine 110.

The protein belongs to the methyltransferase superfamily. RsmH family.

It localises to the cytoplasm. It carries out the reaction cytidine(1402) in 16S rRNA + S-adenosyl-L-methionine = N(4)-methylcytidine(1402) in 16S rRNA + S-adenosyl-L-homocysteine + H(+). In terms of biological role, specifically methylates the N4 position of cytidine in position 1402 (C1402) of 16S rRNA. This is Ribosomal RNA small subunit methyltransferase H from Pseudomonas aeruginosa (strain LESB58).